A 296-amino-acid chain; its full sequence is Xyloglucan endotransglucosylase/hydrolase 1 (296 aa).

Residues 1–23 (MGSSSSMWTVCVILASLASAALC) form the signal peptide. The GH16 domain maps to 24 to 222 (ANPRRPVDVQ…WSKAPFIAAY (199 aa)). Glu108 acts as the Nucleophile in catalysis. Catalysis depends on Glu112, which acts as the Proton donor. Xyloglucan is bound at residue Glu112. N-linked (GlcNAc...) asparagine glycosylation occurs at Asn116. Residues 125-127 (QTN), 135-137 (DRE), 201-202 (DW), and Gly206 each bind xyloglucan. 2 disulfide bridges follow: Cys230–Cys239 and Cys276–Cys290. Arg281 provides a ligand contact to xyloglucan.

Belongs to the glycosyl hydrolase 16 family. XTH group 1 subfamily. Contains at least one intrachain disulfide bond essential for its enzymatic activity. Post-translationally, N-glycosylated; not essential for its enzymatic activity.

The protein localises to the secreted. The protein resides in the cell wall. It localises to the extracellular space. It is found in the apoplast. The catalysed reaction is breaks a beta-(1-&gt;4) bond in the backbone of a xyloglucan and transfers the xyloglucanyl segment on to O-4 of the non-reducing terminal glucose residue of an acceptor, which can be a xyloglucan or an oligosaccharide of xyloglucan.. Functionally, catalyzes xyloglucan endohydrolysis (XEH) and/or endotransglycosylation (XET). Cleaves and religates xyloglucan polymers, an essential constituent of the primary cell wall, and thereby participates in cell wall construction of growing tissues. The protein is Xyloglucan endotransglucosylase/hydrolase 1 of Glycine max (Soybean).